Reading from the N-terminus, the 544-residue chain is Transcription factor bHLH119 (544 aa).

2 disordered regions span residues 12 to 59 and 185 to 208; these read NGQV…QPPR and VASTSATRPQSSASLAPTPPPPSV. A compositionally biased stretch (polar residues) spans 15–29; it reads VVRTSQPQRPSSGKP. Residues 50-59 are compositionally biased toward pro residues; sequence LPLPLLQPPR. T269 carries the post-translational modification Phosphothreonine. S274 carries the post-translational modification Phosphoserine. 2 disordered regions span residues 342–364 and 522–544; these read QGTEEAHGSTSRKRSRAADMHNL and QPPLPLQGQPTSQPSFSHASTSK. The 50-residue stretch at 357–406 folds into the bHLH domain; the sequence is RAADMHNLSERRRRERINERMKTLQELLPRCRKTDKVSMLEDVIEYVKSL. Residues 522–535 are compositionally biased toward low complexity; that stretch reads QPPLPLQGQPTSQP. Phosphoserine occurs at positions 541 and 543.

Homodimer.

Its subcellular location is the nucleus. This chain is Transcription factor bHLH119 (BHLH119), found in Arabidopsis thaliana (Mouse-ear cress).